The sequence spans 472 residues: Adenosylhomocysteinase (472 aa).

Residues threonine 64, aspartate 138, and glutamate 198 each coordinate substrate. 199–201 (TTT) is a binding site for NAD(+). Positions 228 and 232 each coordinate substrate. Residues asparagine 233, 262 to 267 (GFGDVG), glutamate 285, asparagine 320, 341 to 343 (IGH), and asparagine 386 contribute to the NAD(+) site.

This sequence belongs to the adenosylhomocysteinase family. Requires NAD(+) as cofactor.

Its subcellular location is the cytoplasm. It carries out the reaction S-adenosyl-L-homocysteine + H2O = L-homocysteine + adenosine. It participates in amino-acid biosynthesis; L-homocysteine biosynthesis; L-homocysteine from S-adenosyl-L-homocysteine: step 1/1. May play a key role in the regulation of the intracellular concentration of adenosylhomocysteine. The protein is Adenosylhomocysteinase of Prochlorococcus marinus (strain MIT 9215).